Here is a 404-residue protein sequence, read N- to C-terminus: Cysteine desulfurase IscS (404 aa).

Residues 75–76 (AT), Asn-155, Gln-183, and 203–205 (SGH) contribute to the pyridoxal 5'-phosphate site. Lys-206 bears the N6-(pyridoxal phosphate)lysine mark. Thr-243 is a pyridoxal 5'-phosphate binding site. The active-site Cysteine persulfide intermediate is Cys-328. Cys-328 lines the [2Fe-2S] cluster pocket.

It belongs to the class-V pyridoxal-phosphate-dependent aminotransferase family. NifS/IscS subfamily. Homodimer. Forms a heterotetramer with IscU, interacts with other sulfur acceptors. Pyridoxal 5'-phosphate is required as a cofactor.

It localises to the cytoplasm. It catalyses the reaction (sulfur carrier)-H + L-cysteine = (sulfur carrier)-SH + L-alanine. It participates in cofactor biosynthesis; iron-sulfur cluster biosynthesis. Master enzyme that delivers sulfur to a number of partners involved in Fe-S cluster assembly, tRNA modification or cofactor biosynthesis. Catalyzes the removal of elemental sulfur atoms from cysteine to produce alanine. Functions as a sulfur delivery protein for Fe-S cluster synthesis onto IscU, an Fe-S scaffold assembly protein, as well as other S acceptor proteins. The protein is Cysteine desulfurase IscS of Pectobacterium atrosepticum (strain SCRI 1043 / ATCC BAA-672) (Erwinia carotovora subsp. atroseptica).